Reading from the N-terminus, the 262-residue chain is LysM domain-containing protein ARB_03438 (262 aa).

The signal sequence occupies residues 1 to 22 (MVSIPLILGAIILLGTRKAATA). The 45-residue stretch at 31–75 (FAVTAATDDTCQSLGAQWGIGMAQFLKWNPGVNCNALVAGKTYCL) folds into the LysM 1 domain. Residues 85–112 (TASLTPSPQVPTTSRATQTMTSKASTGT) are disordered. The span at 86–112 (ASLTPSPQVPTTSRATQTMTSKASTGT) shows a compositional bias: polar residues. Residues 132–179 (FYHPVSPGDTCQSIVDRYKAFTLDQFYTWNPSVGKNCESLWLGYYVCT) enclose the LysM 2 domain. The tract at residues 184 to 240 (GPNSPSQQPPSQQPPSQQSPSQQSPSQQSPSQQPPSQQPPSQQPPSQQSNTSQQTQP) is disordered. The segment covering 197 to 214 (PPSQQSPSQQSPSQQSPS) has biased composition (low complexity). The span at 215 to 226 (QQPPSQQPPSQQ) shows a compositional bias: pro residues. The span at 227–240 (PPSQQSNTSQQTQP) shows a compositional bias: low complexity. Asn-233 carries N-linked (GlcNAc...) asparagine glycosylation.

Its subcellular location is the secreted. Functionally, might have a role in sequestration of chitin oligosaccharides (breakdown products of fungal cell walls that are released during invasion and act as triggers of host immunity) to dampen host defense. The sequence is that of LysM domain-containing protein ARB_03438 from Arthroderma benhamiae (strain ATCC MYA-4681 / CBS 112371) (Trichophyton mentagrophytes).